We begin with the raw amino-acid sequence, 556 residues long: Oxygen-dependent choline dehydrogenase (556 aa).

4-33 (DYIIIGAGSAGNVLATRLTEDPNTSVLLLE) lines the FAD pocket. Catalysis depends on His-473, which acts as the Proton acceptor.

It belongs to the GMC oxidoreductase family. FAD serves as cofactor.

It catalyses the reaction choline + A = betaine aldehyde + AH2. The enzyme catalyses betaine aldehyde + NAD(+) + H2O = glycine betaine + NADH + 2 H(+). The protein operates within amine and polyamine biosynthesis; betaine biosynthesis via choline pathway; betaine aldehyde from choline (cytochrome c reductase route): step 1/1. Functionally, involved in the biosynthesis of the osmoprotectant glycine betaine. Catalyzes the oxidation of choline to betaine aldehyde and betaine aldehyde to glycine betaine at the same rate. This chain is Oxygen-dependent choline dehydrogenase, found in Shigella flexneri serotype 5b (strain 8401).